The sequence spans 82 residues: UPF0291 protein LJ_1507 (82 aa).

A disordered region spans residues 61–82 (DGKEVTSEKAKEAQRRKGLRKD).

Belongs to the UPF0291 family.

It is found in the cytoplasm. In Lactobacillus johnsonii (strain CNCM I-12250 / La1 / NCC 533), this protein is UPF0291 protein LJ_1507.